The following is a 122-amino-acid chain: uncharacterized protein (122 aa).

An N-terminal signal peptide occupies residues methionine 1–alanine 33.

This is an uncharacterized protein from Saccharomyces cerevisiae (strain ATCC 204508 / S288c) (Baker's yeast).